The following is a 360-amino-acid chain: Peptide chain release factor 1 (360 aa).

Gln235 is modified (N5-methylglutamine).

The protein belongs to the prokaryotic/mitochondrial release factor family. In terms of processing, methylated by PrmC. Methylation increases the termination efficiency of RF1.

It localises to the cytoplasm. Peptide chain release factor 1 directs the termination of translation in response to the peptide chain termination codons UAG and UAA. The chain is Peptide chain release factor 1 from Cupriavidus pinatubonensis (strain JMP 134 / LMG 1197) (Cupriavidus necator (strain JMP 134)).